The sequence spans 522 residues: 3-octaprenyl-4-hydroxybenzoate carboxy-lyase (522 aa).

A Mn(2+)-binding site is contributed by Asn-181. Residues 184 to 186 (IYR), 198 to 200 (RWL), and 203 to 204 (RG) contribute to the prenylated FMN site. Glu-247 contributes to the Mn(2+) binding site. The Proton donor role is filled by Asp-322.

The protein belongs to the UbiD family. In terms of assembly, homohexamer. Requires prenylated FMN as cofactor. Mn(2+) serves as cofactor.

Its subcellular location is the cell membrane. It catalyses the reaction a 4-hydroxy-3-(all-trans-polyprenyl)benzoate + H(+) = a 2-(all-trans-polyprenyl)phenol + CO2. The protein operates within cofactor biosynthesis; ubiquinone biosynthesis. Functionally, catalyzes the decarboxylation of 3-octaprenyl-4-hydroxy benzoate to 2-octaprenylphenol, an intermediate step in ubiquinone biosynthesis. The chain is 3-octaprenyl-4-hydroxybenzoate carboxy-lyase from Paraburkholderia xenovorans (strain LB400).